A 388-amino-acid chain; its full sequence is NADPH-dependent butanol dehydrogenase (388 aa).

This sequence belongs to the iron-containing alcohol dehydrogenase family.

Its function is as follows. This enzyme has activity using butanol and ethanol as substrates. The protein is NADPH-dependent butanol dehydrogenase (adh1) of Clostridium saccharobutylicum.